A 314-amino-acid polypeptide reads, in one-letter code: Malate dehydrogenase (314 aa).

NAD(+) contacts are provided by residues 12-17 (GAGFTG) and Asp36. Positions 87 and 93 each coordinate substrate. NAD(+) is bound by residues Asn100 and 123–125 (LTN). Asn125 serves as a coordination point for substrate. Ser149 carries the post-translational modification Phosphoserine. Arg156 provides a ligand contact to substrate. The active-site Proton acceptor is His180.

This sequence belongs to the LDH/MDH superfamily. MDH type 3 family.

The enzyme catalyses (S)-malate + NAD(+) = oxaloacetate + NADH + H(+). Catalyzes the reversible oxidation of malate to oxaloacetate. The polypeptide is Malate dehydrogenase (Halalkalibacterium halodurans (strain ATCC BAA-125 / DSM 18197 / FERM 7344 / JCM 9153 / C-125) (Bacillus halodurans)).